Reading from the N-terminus, the 405-residue chain is MTVDRRALGFGGSERAVYAADPWTTRGRLYPEDGSPTRSDFQRDRDRIVHTTAFRRLKHKTQVFIAQDGDHYRTRLTHTIEVAQIARALARALKLDEDLAEGVALVHDFGHTPFGHTGEDALHEVLLPYGGFDHNAQSLRIVTKLERRYAEFDGINLTWESLEGLVKHNGPLLTPEGAGTRGPVPQPILDYCELHDLELATYASLEAQVAAIADDIAYNTHDIDDGLRSGYLTFDMLEEIPFLAGLMAEVRARYPHLEPSRFTHEIMRRQITRMVEDVIGVAQQRLSILRPESAADIRAADRVIATFSDAMAETDRQIKALLFKRIYRNPDIMRIRAGAAQIVTDLFAAYMASPKEMQSHYWVDHIAGLADAPKARHVGDYLAGMTDTYAISAHRRLFDHTPDLR.

The region spanning 75 to 219 (RLTHTIEVAQ…AAIADDIAYN (145 aa)) is the HD domain.

It belongs to the dGTPase family. Type 2 subfamily.

This chain is Deoxyguanosinetriphosphate triphosphohydrolase-like protein, found in Rhizobium etli (strain ATCC 51251 / DSM 11541 / JCM 21823 / NBRC 15573 / CFN 42).